The sequence spans 338 residues: MIHKNWAELIKPTQLVVKPGADPARVATVIAEPLERGFGLTLGNALRRVLLSSLQGAAITSVQIDNVLHEFSSVAGVREDVTDIVLNLKGVSIKMDVEGPKRLSISAKGPGVVTAGDISESNGIEILNKDHVICHLDEGADVFMELTVNTGKGYVAADKNRPEDAPIGLIPIDAIYSPVKKVSYEVTPTREGQVLDYDKLTMRVETDGGLTPEDAVAYAARILQDQLSIFVNFEEPESATRHDVEDGLEFNPLLLKKVDELELSVRSANCLKNDNIVYIGDLIQKTEAEMLRTPNFGRKSLNEIKEVLSGMGLHLGMDVEDWPPENIEDLAKRFEDQF.

An alpha N-terminal domain (alpha-NTD) region spans residues 1–234 (MIHKNWAELI…DQLSIFVNFE (234 aa)). An alpha C-terminal domain (alpha-CTD) region spans residues 250–338 (FNPLLLKKVD…DLAKRFEDQF (89 aa)).

The protein belongs to the RNA polymerase alpha chain family. In terms of assembly, homodimer. The RNAP catalytic core consists of 2 alpha, 1 beta, 1 beta' and 1 omega subunit. When a sigma factor is associated with the core the holoenzyme is formed, which can initiate transcription.

The enzyme catalyses RNA(n) + a ribonucleoside 5'-triphosphate = RNA(n+1) + diphosphate. Its function is as follows. DNA-dependent RNA polymerase catalyzes the transcription of DNA into RNA using the four ribonucleoside triphosphates as substrates. The polypeptide is DNA-directed RNA polymerase subunit alpha (Cereibacter sphaeroides (strain ATCC 17025 / ATH 2.4.3) (Rhodobacter sphaeroides)).